A 379-amino-acid chain; its full sequence is Cytochrome b (379 aa).

4 helical membrane passes run 34-54, 78-99, 114-134, and 179-199; these read FGSL…LLAT, WLIR…YLHI, WNIG…GYVL, and FFAL…IHLT. Heme b is bound by residues H84 and H98. Positions 183 and 197 each coordinate heme b. H202 is a binding site for a ubiquinone. 4 helical membrane-spanning segments follow: residues 227-247, 289-309, 321-341, and 348-368; these read TKDM…AFFF, LGGV…PLLH, MSQL…WIGS, and FIII…FLFP.

Belongs to the cytochrome b family. In terms of assembly, the cytochrome bc1 complex contains 11 subunits: 3 respiratory subunits (MT-CYB, CYC1 and UQCRFS1), 2 core proteins (UQCRC1 and UQCRC2) and 6 low-molecular weight proteins (UQCRH/QCR6, UQCRB/QCR7, UQCRQ/QCR8, UQCR10/QCR9, UQCR11/QCR10 and a cleavage product of UQCRFS1). This cytochrome bc1 complex then forms a dimer. Requires heme b as cofactor.

It localises to the mitochondrion inner membrane. In terms of biological role, component of the ubiquinol-cytochrome c reductase complex (complex III or cytochrome b-c1 complex) that is part of the mitochondrial respiratory chain. The b-c1 complex mediates electron transfer from ubiquinol to cytochrome c. Contributes to the generation of a proton gradient across the mitochondrial membrane that is then used for ATP synthesis. This chain is Cytochrome b (MT-CYB), found in Tinamus major (Great tinamou).